Reading from the N-terminus, the 298-residue chain is Cyclin-dependent kinase 2 (298 aa).

Met1 carries the N-acetylmethionine modification. The Protein kinase domain maps to 4–286; the sequence is FQKVEKIGEG…AKAALAHPFF (283 aa). Lys6 carries the post-translational modification N6-acetyllysine. 10 to 18 provides a ligand contact to ATP; sequence IGEGTYGVV. Thr14 carries the phosphothreonine modification. Tyr15 is modified (phosphotyrosine; by WEE1). Tyr19 carries the post-translational modification Phosphotyrosine. ATP is bound by residues Lys33, 81–83, and Asp86; that span reads EFL. Asp127 acts as the Proton acceptor in catalysis. ATP contacts are provided by residues 129–132 and Asp145; that span reads KPQN. Residues Asn132 and Asp145 each coordinate Mg(2+). Residue Thr160 is modified to Phosphothreonine; by CAK and CCRK.

The protein belongs to the protein kinase superfamily. CMGC Ser/Thr protein kinase family. CDC2/CDKX subfamily. Found in a complex with CABLES1, CCNA1 and CCNE1. Interacts with CABLES1. Interacts with UHRF2. Part of a complex consisting of UHRF2, CDK2 and CCNE1. Interacts with the Speedy/Ringo proteins SPDYA and SPDYC. Interaction with SPDYA promotes kinase activation via a conformation change that alleviates obstruction of the substrate-binding cleft by the T-loop. Found in a complex with both SPDYA and CDKN1B/KIP1. Binds to RB1. Binds to CDK7. Binding to CDKN1A (p21) leads to CDK2/cyclin E inactivation at the G1-S phase DNA damage checkpoint, thereby arresting cells at the G1-S transition during DNA repair. Associated with PTPN6 and beta-catenin/CTNNB1. Interacts with CACUL1. May interact with CEP63. Interacts with ANKRD17. Interacts with CEBPA (when phosphorylated). Forms a ternary complex with CCNA2 and CDKN1B; CDKN1B inhibits the kinase activity of CDK2 through conformational rearrangements. Interacts with cyclins A, B1, B3, D, or E. Interacts with CDK2AP2. Mg(2+) serves as cofactor. In terms of processing, phosphorylated at Thr-160 by CDK7 in a CAK complex. Phosphorylation at Thr-160 promotes kinase activity, whereas phosphorylation at Tyr-15 by WEE1 reduces slightly kinase activity. Phosphorylated on Thr-14 and Tyr-15 during S and G2 phases before being dephosphorylated by CDC25A. Post-translationally, nitrosylated after treatment with nitric oxide (DETA-NO).

The protein localises to the cytoplasm. It localises to the cytoskeleton. The protein resides in the microtubule organizing center. It is found in the centrosome. Its subcellular location is the nucleus. The protein localises to the cajal body. It localises to the endosome. The catalysed reaction is L-seryl-[protein] + ATP = O-phospho-L-seryl-[protein] + ADP + H(+). It catalyses the reaction L-threonyl-[protein] + ATP = O-phospho-L-threonyl-[protein] + ADP + H(+). Its activity is regulated as follows. Phosphorylation at Thr-14 or Tyr-15 inactivates the enzyme, while phosphorylation at Thr-160 activates it. Stimulated by MYC. Inactivated by CDKN1A (p21). Its function is as follows. Serine/threonine-protein kinase involved in the control of the cell cycle; essential for meiosis, but dispensable for mitosis. Phosphorylates CABLES1, CTNNB1, CDK2AP2, ERCC6, NBN, USP37, p53/TP53, NPM1, CDK7, RB1, BRCA2, MYC, NPAT, EZH2. Triggers duplication of centrosomes and DNA. Acts at the G1-S transition to promote the E2F transcriptional program and the initiation of DNA synthesis, and modulates G2 progression; controls the timing of entry into mitosis/meiosis by controlling the subsequent activation of cyclin B/CDK1 by phosphorylation, and coordinates the activation of cyclin B/CDK1 at the centrosome and in the nucleus. Crucial role in orchestrating a fine balance between cellular proliferation, cell death, and DNA repair in embryonic stem cells (ESCs). Activity of CDK2 is maximal during S phase and G2; activated by interaction with cyclin E during the early stages of DNA synthesis to permit G1-S transition, and subsequently activated by cyclin A2 (cyclin A1 in germ cells) during the late stages of DNA replication to drive the transition from S phase to mitosis, the G2 phase. EZH2 phosphorylation promotes H3K27me3 maintenance and epigenetic gene silencing. Cyclin E/CDK2 prevents oxidative stress-mediated Ras-induced senescence by phosphorylating MYC. Involved in G1-S phase DNA damage checkpoint that prevents cells with damaged DNA from initiating mitosis; regulates homologous recombination-dependent repair by phosphorylating BRCA2, this phosphorylation is low in S phase when recombination is active, but increases as cells progress towards mitosis. In response to DNA damage, double-strand break repair by homologous recombination a reduction of CDK2-mediated BRCA2 phosphorylation. Involved in regulation of telomere repair by mediating phosphorylation of NBN. Phosphorylation of RB1 disturbs its interaction with E2F1. NPM1 phosphorylation by cyclin E/CDK2 promotes its dissociation from unduplicated centrosomes, thus initiating centrosome duplication. Cyclin E/CDK2-mediated phosphorylation of NPAT at G1-S transition and until prophase stimulates the NPAT-mediated activation of histone gene transcription during S phase. Required for vitamin D-mediated growth inhibition by being itself inactivated. Involved in the nitric oxide- (NO) mediated signaling in a nitrosylation/activation-dependent manner. USP37 is activated by phosphorylation and thus triggers G1-S transition. CTNNB1 phosphorylation regulates insulin internalization. Phosphorylates FOXP3 and negatively regulates its transcriptional activity and protein stability. Phosphorylates ERCC6 which is essential for its chromatin remodeling activity at DNA double-strand breaks. Acts as a regulator of the phosphatidylinositol 3-kinase/protein kinase B signal transduction by mediating phosphorylation of the C-terminus of protein kinase B (PKB/AKT1 and PKB/AKT2), promoting its activation. The chain is Cyclin-dependent kinase 2 (Cdk2) from Rattus norvegicus (Rat).